A 286-amino-acid chain; its full sequence is General stress protein A (286 aa).

Residues 12-17 (CADDNY) and 111-112 (DC) contribute to the UDP site. Mn(2+)-binding residues include Asp-111, Asp-113, and His-247. A UDP-binding site is contributed by 247–253 (HFCGGEK).

The protein belongs to the glycosyltransferase 8 family.

The chain is General stress protein A (gspA) from Bacillus subtilis (strain 168).